Here is a 478-residue protein sequence, read N- to C-terminus: D(1B) dopamine receptor (478 aa).

Residues 1–38 (MLPPGRNGTAHRARLGLQRQLAQVDAPGGSAAPLGPAQ) lie on the Extracellular side of the membrane. Asn7 is a glycosylation site (N-linked (GlcNAc...) asparagine). Residues 39-64 (VVTAGLLTLLIVWTLLGNVLVCAAIV) traverse the membrane as a helical segment. Over 65–75 (RSRHLRAKMTN) the chain is Cytoplasmic. A helical membrane pass occupies residues 76–102 (IFIVSLAVSDLFVALLVMPWKAVAEVA). Over 103–111 (GYWPFGAFC) the chain is Extracellular. Cys111 and Cys211 are joined by a disulfide. The helical transmembrane segment at 112-134 (DIWVAFDIMCSTASILNLCIISV) threads the bilayer. The Cytoplasmic segment spans residues 135–153 (DRYWAISRPFRYERKMTQR). A helical transmembrane segment spans residues 154–179 (VALVMVALAWTLSILISFIPVQLNWH). Topologically, residues 180-215 (RDKAGSQGREGLLSNETPWEEGWELDGRTENCDSSL) are extracellular. Residues 216-240 (NRTYAISSSLISFYIPVAIMIVTYT) traverse the membrane as a helical segment. Over 241–289 (RIYRIAQVQIRRISSLERAAEHAQSCRSRGACEPDPSLRASIKKETKVF) the chain is Cytoplasmic. Residues 290–317 (KTLSVIMGVFVCCWLPFFILNCMVPFCS) form a helical membrane-spanning segment. At 318–335 (SGDAQGPRTGFPCVSETT) the chain is on the extracellular side. Residues 336 to 357 (FDIFVWFGWANSSLNPIIYAFN) form a helical membrane-spanning segment. The Cytoplasmic segment spans residues 358–478 (ADFRKVFAQL…LTPNCFHKTA (121 aa)). Cys370 carries S-palmitoyl cysteine lipidation. Residues 416–446 (GDREVGEEEEAEEEGPFDHMSQISPTTPDGD) are disordered. Residues 420–430 (VGEEEEAEEEG) show a composition bias toward acidic residues.

Belongs to the G-protein coupled receptor 1 family.

Its subcellular location is the cell membrane. Its function is as follows. Dopamine receptor whose activity is mediated by G proteins which activate adenylyl cyclase. The protein is D(1B) dopamine receptor (Drd5) of Mus musculus (Mouse).